The primary structure comprises 441 residues: tRNA modification GTPase MnmE (441 aa).

3 residues coordinate (6S)-5-formyl-5,6,7,8-tetrahydrofolate: Arg-24, Glu-81, and Lys-121. Residues 218–366 (GMVVAIAGPP…LLRELTRFAA (149 aa)) enclose the TrmE-type G domain. Residues 228–233 (NVGKST), 247–253 (SPHAGTT), and 272–275 (DTAG) contribute to the GTP site. Mg(2+) contacts are provided by Ser-232 and Thr-253. Lys-441 is a binding site for (6S)-5-formyl-5,6,7,8-tetrahydrofolate.

This sequence belongs to the TRAFAC class TrmE-Era-EngA-EngB-Septin-like GTPase superfamily. TrmE GTPase family. As to quaternary structure, homodimer. Heterotetramer of two MnmE and two MnmG subunits. The cofactor is K(+).

Its subcellular location is the cytoplasm. Functionally, exhibits a very high intrinsic GTPase hydrolysis rate. Involved in the addition of a carboxymethylaminomethyl (cmnm) group at the wobble position (U34) of certain tRNAs, forming tRNA-cmnm(5)s(2)U34. The polypeptide is tRNA modification GTPase MnmE (Rhodopseudomonas palustris (strain ATCC BAA-98 / CGA009)).